The following is a 207-amino-acid chain: Dephospho-CoA kinase (207 aa).

Residues 5–202 (VVGLTGGIGS…LQYLKLSAEK (198 aa)) form the DPCK domain. 13 to 18 (GSGKST) provides a ligand contact to ATP.

It belongs to the CoaE family.

Its subcellular location is the cytoplasm. The enzyme catalyses 3'-dephospho-CoA + ATP = ADP + CoA + H(+). The protein operates within cofactor biosynthesis; coenzyme A biosynthesis; CoA from (R)-pantothenate: step 5/5. Catalyzes the phosphorylation of the 3'-hydroxyl group of dephosphocoenzyme A to form coenzyme A. This is Dephospho-CoA kinase from Dechloromonas aromatica (strain RCB).